Here is a 790-residue protein sequence, read N- to C-terminus: Sodium- and chloride-dependent glycine transporter 2 (790 aa).

The disordered stretch occupies residues 1–39 (MDYVNVVDGSKKTMNSPEGAAPGLIGATGITNPTPDNDL). The Cytoplasmic segment spans residues 1–192 (MDYVNVVDGS…ARGNWSNKLD (192 aa)). The next 3 helical transmembrane spans lie at 193–213 (FILS…FPYL), 220–240 (GAFL…IFYL), and 264–284 (GCGI…NIIM). Residues G199, A201, V202, and N206 each contribute to the Na(+) site. The Extracellular segment spans residues 285-387 (CYTIFYLFAS…GIEYPGEIRW (103 aa)). C304 and C313 form a disulfide bridge. 4 N-linked (GlcNAc...) asparagine glycosylation sites follow: N336, N346, N351, and N357. Helical transmembrane passes span 388–408 (PLVF…AKGI), 427–447 (VILL…WWFI), and 463–483 (AATQ…TLSS). Na(+) is bound by residues S470 and N502. Helical transmembrane passes span 504–524 (ATSI…AHIL), 556–576 (WAII…FATI), 597–617 (LFTL…ITQG), 631–651 (SYSL…IYGL), 672–692 (ICWA…SFYQ), and 708–728 (MVMG…MFVI). Positions 567 and 570 each coordinate Na(+). The Cytoplasmic portion of the chain corresponds to 729 to 790 (KMFLAPGTFI…PKDFELGTQC (62 aa)).

This sequence belongs to the sodium:neurotransmitter symporter (SNF) (TC 2.A.22) family. SLC6A5 subfamily. In terms of tissue distribution, first expressed in late neurula stages in the anterior spinal cord, where expression intensifies through the tailbud stages, and by hatching, expression is seen in the hindbrain. During late hatching stages, expression extends along most of the length of the spinal cord, mildly intensifies in the hindbrain, and appears in localized regions of the lateral forebrain and medial midbrain. By the swimming tadpole stage, weak expression appears in the anterior hindbrain, with stronger expression in the posterior, postmitotic neurons.

It is found in the cell membrane. It carries out the reaction glycine(out) + chloride(out) + 3 Na(+)(out) = glycine(in) + chloride(in) + 3 Na(+)(in). Its function is as follows. Sodium- and chloride-dependent glycine transporter. Terminates the action of glycine by its high affinity sodium-dependent reuptake into presynaptic terminals. May be responsible for the termination of neurotransmission at strychnine-sensitive glycinergic synapses. This chain is Sodium- and chloride-dependent glycine transporter 2, found in Xenopus laevis (African clawed frog).